The sequence spans 192 residues: MNFILASSSERRKELLKRIVENFEVIPSDYDEKEVAFNGNCSEYVMELSKGKALNVASKLKRDSGIIIASDTIVYFNGEVLGKPSSKEHAYEMLKSLSGEVHEVYSGIVIYDLSSKKIKADYSCSKVKFSNLDDKMIREYIKTGEPMDKAGSYGIQGYGGIFVEKIHGCYYNIVGLPINKLYFLLKEMGVNL.

The active-site Proton acceptor is aspartate 71.

The protein belongs to the Maf family. YhdE subfamily. Requires a divalent metal cation as cofactor.

The protein localises to the cytoplasm. It carries out the reaction dTTP + H2O = dTMP + diphosphate + H(+). It catalyses the reaction UTP + H2O = UMP + diphosphate + H(+). Nucleoside triphosphate pyrophosphatase that hydrolyzes dTTP and UTP. May have a dual role in cell division arrest and in preventing the incorporation of modified nucleotides into cellular nucleic acids. The sequence is that of dTTP/UTP pyrophosphatase from Clostridium tetani (strain Massachusetts / E88).